Consider the following 539-residue polypeptide: MLVFRRNYAKRNTGSKFKILPEYKLKCGLEIHTQLNTDNKLFSMSTNSPFADVDKPNYHTSYFDVSIPGTQPILNLQAVLFALKLSLALRCKVSLNSHFDRKHYFYGDQPLGYQITQHYNPFSSKGKLRLYKDLDSIEEAFKDISVIQLQIEQDTGKSVYNSTDSNTKIDLNRSNVPLIEMVTEPDFTDLKQIRAFIKKYQNLVRHLKISTGDLETGAMRVDVNLSINDYARVELKNLPNTSSITNAIKYEYNRQVNMIEKGEGDQLKHTETRGWTGSETVKLRTKESIIDYRYMPDPELPNILLTNEIVEGVEKTIPTLPDDTCMMLMQEPYGLTLKDAKILTINSNGHDDLYSHDELRACYFSTFDAYHSLCKKQNEEFVRKLPANWIIHELLGNLNKMEIPLIKVSHILPPEKFAELLLLISKKTISNASGKLLLSHILNSFKENSFVASEPINFNALIEEFELHAVSDVGSEELELICESIITELNNNKMIEDIKSGKKKNSIKFLVGQAMRISQGRIQAQEFEITFKRLLGVEP.

This sequence belongs to the GatB/GatE family. GatB subfamily. In terms of assembly, subunit of the heterotrimeric GatFAB amidotransferase (AdT) complex, composed of A, B and F subunits.

The protein resides in the mitochondrion. The catalysed reaction is L-glutamyl-tRNA(Gln) + L-glutamine + ATP + H2O = L-glutaminyl-tRNA(Gln) + L-glutamate + ADP + phosphate + H(+). Allows the formation of correctly charged Gln-tRNA(Gln) through the transamidation of misacylated Glu-tRNA(Gln) in the mitochondria. The reaction takes place in the presence of glutamine and ATP through an activated gamma-phospho-Glu-tRNA(Gln). In Kluyveromyces lactis (strain ATCC 8585 / CBS 2359 / DSM 70799 / NBRC 1267 / NRRL Y-1140 / WM37) (Yeast), this protein is Glutamyl-tRNA(Gln) amidotransferase subunit B, mitochondrial.